Reading from the N-terminus, the 282-residue chain is ATP synthase gamma chain (282 aa).

This sequence belongs to the ATPase gamma chain family. In terms of assembly, F-type ATPases have 2 components, CF(1) - the catalytic core - and CF(0) - the membrane proton channel. CF(1) has five subunits: alpha(3), beta(3), gamma(1), delta(1), epsilon(1). CF(0) has three main subunits: a, b and c.

Its subcellular location is the cell membrane. In terms of biological role, produces ATP from ADP in the presence of a proton gradient across the membrane. The gamma chain is believed to be important in regulating ATPase activity and the flow of protons through the CF(0) complex. The sequence is that of ATP synthase gamma chain from Clostridium botulinum (strain ATCC 19397 / Type A).